A 356-amino-acid chain; its full sequence is tRNA-specific 2-thiouridylase MnmA 2 (356 aa).

ATP-binding positions include 8–15 (GMSGGVDS) and methionine 34. Cysteine 103 acts as the Nucleophile in catalysis. Cysteines 103 and 199 form a disulfide. Position 127 (glycine 127) interacts with ATP. The tract at residues 149–151 (KDQ) is interaction with tRNA. Cysteine 199 acts as the Cysteine persulfide intermediate in catalysis. Residues 305 to 306 (RY) are interaction with tRNA.

Belongs to the MnmA/TRMU family.

It localises to the cytoplasm. The enzyme catalyses S-sulfanyl-L-cysteinyl-[protein] + uridine(34) in tRNA + AH2 + ATP = 2-thiouridine(34) in tRNA + L-cysteinyl-[protein] + A + AMP + diphosphate + H(+). Catalyzes the 2-thiolation of uridine at the wobble position (U34) of tRNA, leading to the formation of s(2)U34. This is tRNA-specific 2-thiouridylase MnmA 2 from Clostridium botulinum (strain Okra / Type B1).